The following is a 195-amino-acid chain: uncharacterized protein (195 aa).

Disordered stretches follow at residues 1 to 54 (MPKG…SNKI) and 173 to 195 (LAGA…KPIS). Over residues 7–20 (KPNEKKEELEKFAK) the composition is skewed to basic and acidic residues. The span at 45–54 (QNDSSSSNKI) shows a compositional bias: polar residues. A coiled-coil region spans residues 48-97 (SSSSNKIVLSQAEKDLLRTELDKTEEEISTLKQVLSARQKHAAELKRKLG).

The protein belongs to the TPD52 family.

This is an uncharacterized protein from Caenorhabditis elegans.